The following is a 235-amino-acid chain: Demethylmenaquinone methyltransferase (235 aa).

S-adenosyl-L-methionine contacts are provided by residues T58, D79, and 106-107 (NA).

It belongs to the class I-like SAM-binding methyltransferase superfamily. MenG/UbiE family.

It carries out the reaction a 2-demethylmenaquinol + S-adenosyl-L-methionine = a menaquinol + S-adenosyl-L-homocysteine + H(+). It participates in quinol/quinone metabolism; menaquinone biosynthesis; menaquinol from 1,4-dihydroxy-2-naphthoate: step 2/2. Its function is as follows. Methyltransferase required for the conversion of demethylmenaquinol (DMKH2) to menaquinol (MKH2). In Shouchella clausii (strain KSM-K16) (Alkalihalobacillus clausii), this protein is Demethylmenaquinone methyltransferase.